Consider the following 379-residue polypeptide: Anthranilate O-methyltransferase 3 (379 aa).

Basic and acidic residues predominate over residues 1–10 (MPMRIERDLH). The tract at residues 1–21 (MPMRIERDLHMATGNGETSYT) is disordered. Tyrosine 20 serves as a coordination point for S-adenosyl-L-homocysteine. An anthranilate-binding site is contributed by glutamine 27. 6 residues coordinate S-adenosyl-L-homocysteine: cysteine 61, asparagine 66, aspartate 100, leucine 101, serine 143, and phenylalanine 144. The anthranilate site is built by histidine 164 and tryptophan 165. Glutamate 265 and phenylalanine 267 together coordinate Mg(2+).

Belongs to the methyltransferase superfamily. Type-7 methyltransferase family. SABATH subfamily.

The enzyme catalyses anthranilate + S-adenosyl-L-methionine = O-methyl anthranilate + S-adenosyl-L-homocysteine. It catalyses the reaction benzoate + S-adenosyl-L-methionine = methyl benzoate + S-adenosyl-L-homocysteine. It carries out the reaction salicylate + S-adenosyl-L-methionine = methyl salicylate + S-adenosyl-L-homocysteine. Methyltransferase involved in the biosynthesis of methyl anthranilate in response to stresses. Utilizes anthranilic acid as substrate. Produces exclusively the O-methyl ester. Can also use benzoic acid as substrate. Low activity with salicylic acid. The protein is Anthranilate O-methyltransferase 3 (AAMT3) of Zea mays (Maize).